A 1763-amino-acid chain; its full sequence is MSQTLSFVLKTHSVRKDFVHSVKLTLARRRDLQYIYNKLSRTIRAEACPSCASYDVCPNCTSGDVPDDGSSTMSIPSWEDVTKSSTYSLLLSEDTSDELCPEDLVNVAAHIRKALSTQSHPANAEMCKEQLTFLLVMAEAMLPQRSRASIPLHQQHTAARLEWREKFFSKPLDFLLERVGVSKDILQTTAIWKIILEKACYCKSYGEQWFTAAKQKLREMKNFESDTLKPLIGGFIDGLRFLTVDNPNPMGFLPKLIGLVKPLNLAMIIDNHENTISGWIITLTAIMELYNITECTIDIITSVITAFYDKIGKATKFYSCVKALFTGFRSEDVANSFWYMAAAILCYLITGLIPNNGRFSKIKACLAGATTLVSGIVATQKLAAMFATWNSESIVNELSARTVALSELNNPTTTSDTDSVERLLELAKILHEEIKIHTLNPIMQSYNPILRNLMSTLDGVITSCNKRKAIARKRQVPVCYILTGPPGCGKTTAAQALAKKLSDQEPSVINLDVDHHDTYTGNEVCIIDEFDSSDKVDYANFVIGMVNSAPMVLNCDMLENKGKLFTSKYIIMTSNSETPVKPSSKRAGAFYRRVTIIDVTNPFVESHKRARPGTSVPRSCYKKNFSHLSLAKRGAECWCKEYVLDPKGLQHQSMKAPPPTFLNIDSLAQTMKQDFLLKNMAFEAEDGCAEHRYGFVCQQEEVETVRRLLNAVRARMNATFTVCVGPETSHSIGCTAHVLTPNETFNGKKFVVSRCNEASLSALEGNCVKSALGVCMSDKDLTHLCHFIKGKIVNDSVRLDELPANQHVVTVNSVFDLAWAVRRHLTLAGQFQAIRAAYDVLTVPDKIPAMLRHWMDETSFSDDHVVTQFVTPGGIVILESCGGARIWALGRNVIRAGGVTATPTGGCVRLMGLSAPTMPWSEIFRELFSLLGRIWSSVKVSALVLTALGMYASRFRPKSEAKGKTKLKIGTYRGRGVALTDDEYDEWREHNASRKLDLSVEDFLMLRHRAALGADDNDAVKFRSWWNSRTKMANDYEDVTVIGKGGVKHEKIRTNTLKAVDRGYDVSFAEESGPGTKFHKNAIGSVTDVCGEHKGYCIHMGHGVYASVAHVVKGDSFFLGERIFDLKTNGEFCCFRSTKILPSAAPFFSGKPTRDPWGSPVATEWKPKMYTTTSGKILGCFATTSTETHPGDCGLPYIDDNGRVTGLHTGSGGPKTPSAKLVVPYVHIDMKTKSVTAQKYDVTKPDISYKGLICKQLDEIRIIPKGTRLHVSPAHTEDYQECSHQPASLGSGDPRCPKSLTAIVVDSLKPYCENVEGPPHDVLHRVQKMLIDHLSGFVPMNISSETSMLSAFHKLNHDTSCGPYLGGRKKDHMANGEPDKQLLDLLSAKWKLATQGIALPHEYTIGLKDELRPVEKVSEGKRRMIWGCDVGVATVCAAAFKGVSDAITANHQYGPIQVGINMDSPSVEALFQRIKSAAKVFAVDYSKWDSTQSPRVSAASIDILRYFSDRSPIVDSASNTLKSPPVAIFNGVAVKVSSGLPSGMPLTSVINSLNHCLYVGCAILQSLEAKAIPVTWNLFSTFDIMTYGDDGVYMFPIMYASISDQIFGNLSSYGLKPTRVDKSVGAIEPIDPDSVVFLKRTITRTPQGIRGLLDRSSIIRQFYYIKGENSDDWKSPPKHIDPTSRGQQLWNACLYASQHGLEFFNKVYRLAERAVEYEELHFEPPTYASALDHYNSQFNGVEARSDQIDSSGMTALHCDVFEV.

An SF3 helicase domain is found at 458 to 614 (DGVITSCNKR…ESHKRARPGT (157 aa)). Residue 484 to 491 (GPPGCGKT) participates in ATP binding. Residues 981-986 (DDEYDE) are acidic. Residue Tyr984 is modified to O-(5'-phospho-RNA)-tyrosine. Thr1040 carries the phosphothreonine modification. Position 1067 is a phosphoserine (Ser1067). The Peptidase C24 domain maps to 1073-1229 (GPGTKFHKNA…KLVVPYVHID (157 aa)). Catalysis depends on for 3CLpro activity residues His1110, Glu1131, and Cys1193. Positions 1478-1603 (AKVFAVDYSK…MFPIMYASIS (126 aa)) constitute a RdRp catalytic domain.

Homodimer. Interacts with NTPase, protein p30 and protease-polymerase p76. As to quaternary structure, interacts with capsid protein VP1 and protease-polymerase p76. Interacts with host IEF4e; this interaction plays a role in translation of viral proteins. In terms of assembly, homooligomer. Interacts with Vpg, protein p32 and may interact with capsid protein VP1. Post-translationally, specific enzymatic cleavages in vivo yield mature proteins. Pro-Pol is first autocatalytically cleaved, then processes the whole polyprotein. VPg is uridylylated by the polymerase and is covalently attached to the 5'-end of the polyadenylated genomic and subgenomic RNAs. This uridylylated form acts as a nucleotide-peptide primer for the polymerase.

It localises to the host endoplasmic reticulum membrane. The enzyme catalyses a ribonucleoside 5'-triphosphate + H2O = a ribonucleoside 5'-diphosphate + phosphate + H(+). The catalysed reaction is RNA(n) + a ribonucleoside 5'-triphosphate = RNA(n+1) + diphosphate. It carries out the reaction Endopeptidase with a preference for cleavage when the P1 position is occupied by Glu-|-Xaa and the P1' position is occupied by Gly-|-Yaa.. Its function is as follows. Together with NTPase and NS4, initiates the formation of the replication complex. Induces the proliferation of the host smooth ER membranes forming long tubular structures. These remodeled membranes probably form the viral factories that contain the replication complex. In terms of biological role, displays NTPase activity, but no helicase activity. Induces the formation of convoluted membranes derived from the host ER. These remodeled membranes probably form the viral factories that contain the replication complex. Together with NS2 and NS4, initiates the formation of the replication complex. Functionally, probable key protein responsible for the formation of membrane alterations by the virus. Induces the formation of convoluted membranes derived from the host ER. These remodeled membranes probably form the viral factories that contain the replication complex. Together with NS2 and NTPase, initiates the formation of the replication complex. Viral genome-linked protein is covalently linked to the 5'-end of the positive-strand, negative-strand genomic RNAs and subgenomic RNA. Acts as a genome-linked replication primer. May recruit ribosome to viral RNA thereby promoting viral proteins translation. Interacts with host translation initiation complex to allow the translation of viral proteins. Its function is as follows. Protease-polymerase p76 processes the polyprotein: Pro-Pol is first released by autocleavage, then all other proteins are cleaved. Cleaves host translation initiation factor eIF4G1, eIF4G2 and PABP1 thereby inducing a shutdown of host protein synthesis. This shutdown may not prevent viral mRNA from being translated since viral Vpg replaces the cap. It is also an RNA-directed RNA polymerase which replicates genomic and antigenomic viral RNA by recognizing specific signals. Also transcribes a subgenomic mRNA by initiating RNA synthesis internally on antigenomic RNA. This sgRNA codes for structural proteins. Catalyzes the covalent attachment VPg with viral RNAs. Cleaves host G3BP1 thereby preventing the assembly of host stress granules. This Felidae (cat family) protein is Genome polyprotein.